The primary structure comprises 274 residues: Mitochondrial S-adenosylmethionine carrier protein (274 aa).

Solcar repeat units lie at residues 4 to 77, 86 to 168, and 177 to 265; these read PGFV…VKWF, LTPM…LKAL, and VDSW…THSL. A run of 6 helical transmembrane segments spans residues 5 to 25, 49 to 69, 85 to 105, 142 to 162, 182 to 202, and 238 to 258; these read GFVAALVAGGVAGVSVDLILF, IYAGVPSAAIGSFPNAAAFFI, YLTPMKHMLAASAGEVVACLI, RGYKSTVLREIPFSLVQFPLW, SAVCGAFAGGFAAAVTTPLDV, and FAGVFPRMAAISLGGFIFLGA.

It belongs to the mitochondrial carrier (TC 2.A.29) family. As to expression, widely expressed. Highly expressed in testis, with moderate expression in brain, heart, kidney, lung, skeletal muscle, pancreas, small intestine and liver, and low expression in spleen.

It is found in the mitochondrion inner membrane. It catalyses the reaction S-adenosyl-L-homocysteine(out) + S-adenosyl-L-methionine(in) = S-adenosyl-L-homocysteine(in) + S-adenosyl-L-methionine(out). Its activity is regulated as follows. Strongly inhibited by tannic acid and Bromocresol Purple. Its function is as follows. Mitochondrial S-adenosyl-L-methionine/S-adenosyl-L-homocysteine antiporter. Mediates the exchange of cytosolic S-adenosyl-L-methionine, the predominant methyl-group donor for macromolecule methylation processes, for mitochondrial S-adenosylhomocysteine(SAH), a by-product of methylation reactions. This is Mitochondrial S-adenosylmethionine carrier protein from Homo sapiens (Human).